The following is a 418-amino-acid chain: Bifunctional enzyme IspD/IspF (418 aa).

Residues 1-261 (MADTPALIPQ…EFKRASDMNF (261 aa)) are 2-C-methyl-D-erythritol 4-phosphate cytidylyltransferase. A 2-C-methyl-D-erythritol 2,4-cyclodiphosphate synthase region spans residues 262–418 (RIGEGWDIHA…RATVLLRKFI (157 aa)). Aspartate 268 and histidine 270 together coordinate a divalent metal cation. 4-CDP-2-C-methyl-D-erythritol 2-phosphate contacts are provided by residues 268–270 (DIH) and 294–295 (HS). Residue histidine 302 coordinates a divalent metal cation. Residues 316-318 (DIG) and 321-325 (FPDTD) each bind 4-CDP-2-C-methyl-D-erythritol 2-phosphate.

The protein in the N-terminal section; belongs to the IspD/TarI cytidylyltransferase family. IspD subfamily. This sequence in the C-terminal section; belongs to the IspF family. The cofactor is a divalent metal cation.

It carries out the reaction 2-C-methyl-D-erythritol 4-phosphate + CTP + H(+) = 4-CDP-2-C-methyl-D-erythritol + diphosphate. The enzyme catalyses 4-CDP-2-C-methyl-D-erythritol 2-phosphate = 2-C-methyl-D-erythritol 2,4-cyclic diphosphate + CMP. Its pathway is isoprenoid biosynthesis; isopentenyl diphosphate biosynthesis via DXP pathway; isopentenyl diphosphate from 1-deoxy-D-xylulose 5-phosphate: step 2/6. It participates in isoprenoid biosynthesis; isopentenyl diphosphate biosynthesis via DXP pathway; isopentenyl diphosphate from 1-deoxy-D-xylulose 5-phosphate: step 4/6. In terms of biological role, bifunctional enzyme that catalyzes the formation of 4-diphosphocytidyl-2-C-methyl-D-erythritol from CTP and 2-C-methyl-D-erythritol 4-phosphate (MEP) (IspD), and catalyzes the conversion of 4-diphosphocytidyl-2-C-methyl-D-erythritol 2-phosphate (CDP-ME2P) to 2-C-methyl-D-erythritol 2,4-cyclodiphosphate (ME-CPP) with a corresponding release of cytidine 5-monophosphate (CMP) (IspF). This chain is Bifunctional enzyme IspD/IspF, found in Albidiferax ferrireducens (strain ATCC BAA-621 / DSM 15236 / T118) (Rhodoferax ferrireducens).